The following is a 158-amino-acid chain: NAD(P)H-quinone oxidoreductase subunit J, chloroplastic (158 aa).

Belongs to the complex I 30 kDa subunit family. As to quaternary structure, NDH is composed of at least 16 different subunits, 5 of which are encoded in the nucleus.

It localises to the plastid. The protein localises to the chloroplast thylakoid membrane. The enzyme catalyses a plastoquinone + NADH + (n+1) H(+)(in) = a plastoquinol + NAD(+) + n H(+)(out). The catalysed reaction is a plastoquinone + NADPH + (n+1) H(+)(in) = a plastoquinol + NADP(+) + n H(+)(out). Its function is as follows. NDH shuttles electrons from NAD(P)H:plastoquinone, via FMN and iron-sulfur (Fe-S) centers, to quinones in the photosynthetic chain and possibly in a chloroplast respiratory chain. The immediate electron acceptor for the enzyme in this species is believed to be plastoquinone. Couples the redox reaction to proton translocation, and thus conserves the redox energy in a proton gradient. The sequence is that of NAD(P)H-quinone oxidoreductase subunit J, chloroplastic from Lemna minor (Common duckweed).